Reading from the N-terminus, the 191-residue chain is Clusterin (191 aa).

N-linked (GlcNAc...) asparagine glycosylation is found at Asn79, Asn116, Asn142, and Asn162. Ser184 carries the phosphoserine modification.

It belongs to the clusterin family. As to quaternary structure, antiparallel disulfide-linked heterodimer of an alpha chain and a beta chain. Self-associates and forms higher oligomers. Interacts with a broad range of misfolded proteins, including APP, APOC2 and LYZ. Slightly acidic pH promotes interaction with misfolded proteins. Forms high-molecular weight oligomers upon interaction with misfolded proteins. Interacts with APOA1, LRP2, CLUAP1 and PON1. Interacts with the complement membrane attack complex. Interacts (via alpha chain) with XRCC6. Interacts with SYVN1, COMMD1, BTRC, CUL1 and with ubiquitin and SCF (SKP1-CUL1-F-box protein) E3 ubiquitin-protein ligase complexes. Interacts (via alpha chain) with BAX in stressed cells, where BAX undergoes a conformation change leading to association with the mitochondrial membrane. Does not interact with BAX in unstressed cells. Found in a complex with LTF, CLU, EPPIN and SEMG1. Interacts (immaturely glycosylated pre-secreted form) with HSPA5; this interaction promotes CLU stability and facilitates stress-induced CLU retrotranslocation from the secretory pathway to the mitochondria, thereby reducing stress-induced apoptosis by stabilizing mitochondrial membrane integrity. Interacts with BCL2L1; this interaction releases and activates BAX and promotes cell death. Interacts with TGFBR2 and ACVR1. Interacts (secreted form) with STMN3; this interaction may act as an important modulator during neuronal differentiation. Proteolytically cleaved on its way through the secretory system, probably within the Golgi lumen. Proteolytic cleavage is not necessary for its chaperone activity. All non-secreted forms are not proteolytically cleaved. Chaperone activity of uncleaved forms is dependent on a non-reducing environment. In terms of processing, polyubiquitinated, leading to proteasomal degradation. Under cellular stress, the intracellular level of cleaved form is reduced due to proteasomal degradation. Post-translationally, heavily N-glycosylated. About 30% of the protein mass is comprised of complex N-linked carbohydrate. Endoplasmic reticulum (ER) stress induces changes in glycosylation status and increases level of hypoglycosylated forms. Core carbohydrates are essential for chaperone activity. Non-secreted forms are hypoglycosylated or unglycosylated.

It is found in the secreted. The protein localises to the nucleus. It localises to the cytoplasm. The protein resides in the mitochondrion membrane. Its subcellular location is the cytosol. It is found in the microsome. The protein localises to the endoplasmic reticulum. It localises to the mitochondrion. The protein resides in the perinuclear region. Its subcellular location is the cytoplasmic vesicle. It is found in the secretory vesicle. The protein localises to the chromaffin granule. Functionally, functions as extracellular chaperone that prevents aggregation of non native proteins. Prevents stress-induced aggregation of blood plasma proteins. Inhibits formation of amyloid fibrils by APP, APOC2, B2M, CALCA, CSN3, SNCA and aggregation-prone LYZ variants (in vitro). Does not require ATP. Maintains partially unfolded proteins in a state appropriate for subsequent refolding by other chaperones, such as HSPA8/HSC70. Does not refold proteins by itself. Binding to cell surface receptors triggers internalization of the chaperone-client complex and subsequent lysosomal or proteasomal degradation. When secreted, protects cells against apoptosis and against cytolysis by complement: inhibits assembly of the complement membrane attack complex (MAC) by preventing polymerization of C9 pore component of the MAC complex. Intracellular forms interact with ubiquitin and SCF (SKP1-CUL1-F-box protein) E3 ubiquitin-protein ligase complexes and promote the ubiquitination and subsequent proteasomal degradation of target proteins. Promotes proteasomal degradation of COMMD1 and IKBKB. Modulates NF-kappa-B transcriptional activity. Following stress, promotes apoptosis. Inhibits apoptosis when associated with the mitochondrial membrane by interference with BAX-dependent release of cytochrome c into the cytoplasm. Plays a role in the regulation of cell proliferation. An intracellular form suppresses stress-induced apoptosis by stabilizing mitochondrial membrane integrity through interaction with HSPA5. Secreted form does not affect caspase or BAX-mediated intrinsic apoptosis and TNF-induced NF-kappa-B-activity. Secreted form act as an important modulator during neuronal differentiation through interaction with STMN3. Plays a role in the clearance of immune complexes that arise during cell injury. This is Clusterin from Mesocricetus auratus (Golden hamster).